Here is a 329-residue protein sequence, read N- to C-terminus: Malate dehydrogenase (329 aa).

12 to 18 serves as a coordination point for NAD(+); sequence GAAGQIG. 2 residues coordinate substrate: Arg-95 and Arg-101. NAD(+) is bound by residues Asn-108, Gln-115, and 132–134; that span reads VGN. 2 residues coordinate substrate: Asn-134 and Arg-165. His-190 acts as the Proton acceptor in catalysis.

Belongs to the LDH/MDH superfamily. MDH type 2 family.

The enzyme catalyses (S)-malate + NAD(+) = oxaloacetate + NADH + H(+). Functionally, catalyzes the reversible oxidation of malate to oxaloacetate. The polypeptide is Malate dehydrogenase (Bordetella petrii (strain ATCC BAA-461 / DSM 12804 / CCUG 43448)).